The following is a 350-amino-acid chain: Biotin synthase (350 aa).

The Radical SAM core domain occupies 41 to 268 (NEVQISRLLS…LSRVRLSAGR (228 aa)). [4Fe-4S] cluster is bound by residues C56, C60, and C63. Residues C100, C131, C191, and R263 each contribute to the [2Fe-2S] cluster site.

It belongs to the radical SAM superfamily. Biotin synthase family. Homodimer. [4Fe-4S] cluster is required as a cofactor. The cofactor is [2Fe-2S] cluster.

It catalyses the reaction (4R,5S)-dethiobiotin + (sulfur carrier)-SH + 2 reduced [2Fe-2S]-[ferredoxin] + 2 S-adenosyl-L-methionine = (sulfur carrier)-H + biotin + 2 5'-deoxyadenosine + 2 L-methionine + 2 oxidized [2Fe-2S]-[ferredoxin]. It functions in the pathway cofactor biosynthesis; biotin biosynthesis; biotin from 7,8-diaminononanoate: step 2/2. Functionally, catalyzes the conversion of dethiobiotin (DTB) to biotin by the insertion of a sulfur atom into dethiobiotin via a radical-based mechanism. The polypeptide is Biotin synthase (Shewanella oneidensis (strain ATCC 700550 / JCM 31522 / CIP 106686 / LMG 19005 / NCIMB 14063 / MR-1)).